Here is a 303-residue protein sequence, read N- to C-terminus: Monoglyceride lipase (303 aa).

Threonine 10 carries the post-translational modification Phosphothreonine. Position 58 is a 3'-nitrotyrosine (tyrosine 58). The Nucleophile role is filled by serine 122. Serine 189 is subject to Phosphoserine. Active-site charge relay system residues include aspartate 239 and histidine 269.

Belongs to the AB hydrolase superfamily. Monoacylglycerol lipase family. Homodimer. Ubiquitous. Highly expressed in adipose tissue, adrenal gland, ovary, heart, spleen, lung, skeletal muscle, kidney and testis. Highly expressed throughout the brain.

Its subcellular location is the cytoplasm. The protein resides in the cytosol. It is found in the membrane. It carries out the reaction Hydrolyzes glycerol monoesters of long-chain fatty acids.. The enzyme catalyses a 1-acylglycerol + H2O = glycerol + a fatty acid + H(+). The catalysed reaction is a 2-acylglycerol + H2O = glycerol + a fatty acid + H(+). It catalyses the reaction 1-octanoylglycerol + H2O = octanoate + glycerol + H(+). It carries out the reaction 2-(5Z,8Z,11Z,14Z-eicosatetraenoyl)-glycerol + H2O = glycerol + (5Z,8Z,11Z,14Z)-eicosatetraenoate + H(+). The enzyme catalyses 1-decanoylglycerol + H2O = decanoate + glycerol + H(+). The catalysed reaction is 1-dodecanoylglycerol + H2O = dodecanoate + glycerol + H(+). It catalyses the reaction 1-tetradecanoylglycerol + H2O = tetradecanoate + glycerol + H(+). It carries out the reaction 2-hexadecanoylglycerol + H2O = glycerol + hexadecanoate + H(+). The enzyme catalyses 1-(9Z-octadecenoyl)-glycerol + H2O = glycerol + (9Z)-octadecenoate + H(+). The catalysed reaction is 2-(9Z-octadecenoyl)-glycerol + H2O = glycerol + (9Z)-octadecenoate + H(+). It catalyses the reaction 2-(9Z,12Z-octadecadienoyl)-glycerol + H2O = (9Z,12Z)-octadecadienoate + glycerol + H(+). It carries out the reaction 1-(5Z,8Z,11Z,14Z-eicosatetraenoyl)-glycerol + H2O = glycerol + (5Z,8Z,11Z,14Z)-eicosatetraenoate + H(+). The enzyme catalyses 1-(9Z,12Z-octadecadienoyl)-glycerol + H2O = (9Z,12Z)-octadecadienoate + glycerol + H(+). The catalysed reaction is 1-hexadecanoylglycerol + H2O = glycerol + hexadecanoate + H(+). It catalyses the reaction 1-octadecanoylglycerol + H2O = octadecanoate + glycerol + H(+). It carries out the reaction prostaglandin E2 1-glyceryl ester + H2O = prostaglandin E2 + glycerol + H(+). The enzyme catalyses prostaglandin D2-1-glycerol ester + H2O = prostaglandin D2 + glycerol + H(+). The catalysed reaction is 2-glyceryl-15-deoxy-Delta(12,14)-prostaglandin J2 + H2O = 15-deoxy-Delta(12,14)-prostaglandin J2 + glycerol + H(+). It catalyses the reaction prostaglandin F2alpha 1-glyceryl ester + H2O = prostaglandin F2alpha + glycerol + H(+). Its pathway is glycerolipid metabolism; triacylglycerol degradation. Converts monoacylglycerides to free fatty acids and glycerol. Hydrolyzes the endocannabinoid 2-arachidonoylglycerol, and thereby contributes to the regulation of endocannabinoid signaling, nociperception and perception of pain. Regulates the levels of fatty acids that serve as signaling molecules and promote cancer cell migration, invasion and tumor growth. This Rattus norvegicus (Rat) protein is Monoglyceride lipase.